We begin with the raw amino-acid sequence, 229 residues long: Putative N-acetylmannosamine-6-phosphate 2-epimerase (229 aa).

This sequence belongs to the NanE family.

It carries out the reaction an N-acyl-D-glucosamine 6-phosphate = an N-acyl-D-mannosamine 6-phosphate. Its pathway is amino-sugar metabolism; N-acetylneuraminate degradation; D-fructose 6-phosphate from N-acetylneuraminate: step 3/5. Its function is as follows. Converts N-acetylmannosamine-6-phosphate (ManNAc-6-P) to N-acetylglucosamine-6-phosphate (GlcNAc-6-P). This Escherichia coli O157:H7 protein is Putative N-acetylmannosamine-6-phosphate 2-epimerase.